A 100-amino-acid polypeptide reads, in one-letter code: uncharacterized protein (100 aa).

Belongs to the ycf15 family.

It localises to the plastid. Its subcellular location is the chloroplast. This is an uncharacterized protein from Panax ginseng (Korean ginseng).